We begin with the raw amino-acid sequence, 232 residues long: Ribonuclease 3 (232 aa).

One can recognise an RNase III domain in the interval 5–134 (QTVLKNHFAI…FLGALLLDKD (130 aa)). Glutamate 47 is a binding site for Mg(2+). Aspartate 51 is an active-site residue. Aspartate 120 and glutamate 123 together coordinate Mg(2+). Residue glutamate 123 is part of the active site. Residues 160-229 (DYKTHLQELL…AKNAVEKGLD (70 aa)) form the DRBM domain.

The protein belongs to the ribonuclease III family. Homodimer. Mg(2+) is required as a cofactor.

Its subcellular location is the cytoplasm. It catalyses the reaction Endonucleolytic cleavage to 5'-phosphomonoester.. Digests double-stranded RNA. Involved in the processing of primary rRNA transcript to yield the immediate precursors to the large and small rRNAs (23S and 16S). Processes some mRNAs, and tRNAs when they are encoded in the rRNA operon. Processes pre-crRNA and tracrRNA of type II CRISPR loci if present in the organism. The protein is Ribonuclease 3 of Streptococcus pneumoniae serotype 4 (strain ATCC BAA-334 / TIGR4).